The chain runs to 338 residues: Flap endonuclease 1 (338 aa).

Residues 1-98 (MGTDIGDLLQ…ETLSRRKEVR (98 aa)) are N-domain. Residues Asp27, Asp80, Glu152, Glu154, Asp173, Asp175, and Asp236 each contribute to the Mg(2+) site. The I-domain stretch occupies residues 116-257 (AAYKYAQASS…TALKLIKKHG (142 aa)). The interaction with PCNA stretch occupies residues 330–338 (RQKTLDQWF).

It belongs to the XPG/RAD2 endonuclease family. FEN1 subfamily. As to quaternary structure, interacts with PCNA. PCNA stimulates the nuclease activity without altering cleavage specificity. The cofactor is Mg(2+).

Its function is as follows. Structure-specific nuclease with 5'-flap endonuclease and 5'-3' exonuclease activities involved in DNA replication and repair. During DNA replication, cleaves the 5'-overhanging flap structure that is generated by displacement synthesis when DNA polymerase encounters the 5'-end of a downstream Okazaki fragment. Binds the unpaired 3'-DNA end and kinks the DNA to facilitate 5' cleavage specificity. Cleaves one nucleotide into the double-stranded DNA from the junction in flap DNA, leaving a nick for ligation. Also involved in the base excision repair (BER) pathway. Acts as a genome stabilization factor that prevents flaps from equilibrating into structures that lead to duplications and deletions. Also possesses 5'-3' exonuclease activity on nicked or gapped double-stranded DNA. The polypeptide is Flap endonuclease 1 (Methanosarcina acetivorans (strain ATCC 35395 / DSM 2834 / JCM 12185 / C2A)).